Here is a 1446-residue protein sequence, read N- to C-terminus: DNA polymerase III PolC-type (1446 aa).

The Exonuclease domain maps to 425 to 581; that stretch reads YVIFDVETTG…ADAESTGYLL (157 aa).

The protein belongs to the DNA polymerase type-C family. PolC subfamily.

It localises to the cytoplasm. The catalysed reaction is DNA(n) + a 2'-deoxyribonucleoside 5'-triphosphate = DNA(n+1) + diphosphate. In terms of biological role, required for replicative DNA synthesis. This DNA polymerase also exhibits 3' to 5' exonuclease activity. The protein is DNA polymerase III PolC-type of Latilactobacillus sakei subsp. sakei (strain 23K) (Lactobacillus sakei subsp. sakei).